Here is a 50-residue protein sequence, read N- to C-terminus: Putative protein HokG (50 aa).

Residues 5–25 (YALVAIIVLCCTVLGFTLMVG) form a helical membrane-spanning segment.

This sequence belongs to the Hok/Gef family.

The protein resides in the cell inner membrane. Functionally, toxic component of a type I toxin-antitoxin (TA) system. When overexpressed kills cells within minutes; causes collapse of the transmembrane potential and arrest of respiration. Its toxic effect is probably neutralized by an antisense antitoxin Sok RNA. This Escherichia coli O157:H7 protein is Putative protein HokG (hokG).